The following is a 343-amino-acid chain: MGTDGDRAKAVDLAISQIERQFGKGSIMRLGAKERIEDIAVIPTGALSLDIALGIGGVPRGRIIEIFGPESGGKTTLALHIIAEAQKRNGLAAFIDAEHALDVSYARKIGVNTDDLLISQPDTGEQALEIAETLVRSGALDILVVDSVAALVPKAEIEGEMGDAQMGLQARLMSQALRKLTGSISKSNTTVIFINQLRMKIGVFFGNPETTTGGNALKFYASMRLDIRKSGSIKSGQDVIGMRTKVKVVKNKVAPPFRETEFDILFGEGISKAGDILDLAAESGIVEKSGAWYSYGGERIGQGRDNTRNFLKEHPDILVRIEEQVRSEHGLKPRLQEQEEPAK.

Residue 68–75 (GPESGGKT) participates in ATP binding.

The protein belongs to the RecA family.

The protein localises to the cytoplasm. In terms of biological role, can catalyze the hydrolysis of ATP in the presence of single-stranded DNA, the ATP-dependent uptake of single-stranded DNA by duplex DNA, and the ATP-dependent hybridization of homologous single-stranded DNAs. It interacts with LexA causing its activation and leading to its autocatalytic cleavage. This is Protein RecA from Syntrophus aciditrophicus (strain SB).